The chain runs to 307 residues: ATP synthase gamma chain (307 aa).

It belongs to the ATPase gamma chain family. In terms of assembly, F-type ATPases have 2 components, CF(1) - the catalytic core - and CF(0) - the membrane proton channel. CF(1) has five subunits: alpha(3), beta(3), gamma(1), delta(1), epsilon(1). CF(0) has three main subunits: a, b and c.

It localises to the cell membrane. Its function is as follows. Produces ATP from ADP in the presence of a proton gradient across the membrane. The gamma chain is believed to be important in regulating ATPase activity and the flow of protons through the CF(0) complex. The polypeptide is ATP synthase gamma chain (Bifidobacterium longum subsp. infantis (strain ATCC 15697 / DSM 20088 / JCM 1222 / NCTC 11817 / S12)).